The primary structure comprises 44 residues: Cytochrome b559 subunit beta (44 aa).

A helical transmembrane segment spans residues 19-35 (WLAIHGIAVPTIFFLGA). Position 23 (His-23) interacts with heme.

This sequence belongs to the PsbE/PsbF family. As to quaternary structure, heterodimer of an alpha subunit and a beta subunit. PSII is composed of 1 copy each of membrane proteins PsbA, PsbB, PsbC, PsbD, PsbE, PsbF, PsbH, PsbI, PsbJ, PsbK, PsbL, PsbM, PsbT, PsbX, PsbY, PsbZ, Psb30/Ycf12, at least 3 peripheral proteins of the oxygen-evolving complex and a large number of cofactors. It forms dimeric complexes. Requires heme b as cofactor.

It localises to the plastid. It is found in the chloroplast thylakoid membrane. Its function is as follows. This b-type cytochrome is tightly associated with the reaction center of photosystem II (PSII). PSII is a light-driven water:plastoquinone oxidoreductase that uses light energy to abstract electrons from H(2)O, generating O(2) and a proton gradient subsequently used for ATP formation. It consists of a core antenna complex that captures photons, and an electron transfer chain that converts photonic excitation into a charge separation. In Chlamydomonas reinhardtii (Chlamydomonas smithii), this protein is Cytochrome b559 subunit beta.